Here is a 287-residue protein sequence, read N- to C-terminus: IQ domain-containing protein K (287 aa).

This Homo sapiens (Human) protein is IQ domain-containing protein K (IQCK).